A 178-amino-acid chain; its full sequence is Cytidylate kinase (178 aa).

7-15 (GLPGTGTTT) is an ATP binding site.

It belongs to the cytidylate kinase family. Type 2 subfamily.

The protein localises to the cytoplasm. It carries out the reaction CMP + ATP = CDP + ADP. It catalyses the reaction dCMP + ATP = dCDP + ADP. The sequence is that of Cytidylate kinase from Methanococcus maripaludis (strain DSM 14266 / JCM 13030 / NBRC 101832 / S2 / LL).